The following is a 376-amino-acid chain: Serpin B6 (376 aa).

The residue at position 1 (M1) is an N-acetylmethionine. At S151 the chain carries Phosphoserine. K195 bears the N6-acetyllysine mark.

Belongs to the serpin family. Ov-serpin subfamily. As to quaternary structure, forms a complex with the monomeric form of beta-tryptase.

The protein localises to the cytoplasm. In terms of biological role, inhibitor of cathepsin G, kallikrein-8 and thrombin. May play an important role in the inner ear in the protection against leakage of lysosomal content during stress. May be involved in the regulation of serine proteinases present in the brain or extravasated from the blood. The sequence is that of Serpin B6 (SERPINB6) from Pongo abelii (Sumatran orangutan).